The sequence spans 266 residues: Dihydropteroate synthase (266 aa).

The region spanning 12–260 is the Pterin-binding domain; sequence AAIMGILNVT…DVKANQDIVA (249 aa). Asn19 provides a ligand contact to Mg(2+). Residues Thr59, Asp93, Asn112, Asp176, Lys212, and 248–250 each bind (7,8-dihydropterin-6-yl)methyl diphosphate; that span reads RVH.

It belongs to the DHPS family. In terms of assembly, homodimer or homotrimer. The cofactor is Mg(2+).

It carries out the reaction (7,8-dihydropterin-6-yl)methyl diphosphate + 4-aminobenzoate = 7,8-dihydropteroate + diphosphate. It participates in cofactor biosynthesis; tetrahydrofolate biosynthesis; 7,8-dihydrofolate from 2-amino-4-hydroxy-6-hydroxymethyl-7,8-dihydropteridine diphosphate and 4-aminobenzoate: step 1/2. Its function is as follows. Catalyzes the condensation of para-aminobenzoate (pABA) with 6-hydroxymethyl-7,8-dihydropterin diphosphate (DHPt-PP) to form 7,8-dihydropteroate (H2Pte), the immediate precursor of folate derivatives. The protein is Dihydropteroate synthase (folP) of Streptococcus pyogenes serotype M3 (strain ATCC BAA-595 / MGAS315).